Reading from the N-terminus, the 352-residue chain is S-adenosylmethionine:tRNA ribosyltransferase-isomerase (352 aa).

The protein belongs to the QueA family. In terms of assembly, monomer.

It is found in the cytoplasm. It catalyses the reaction 7-aminomethyl-7-carbaguanosine(34) in tRNA + S-adenosyl-L-methionine = epoxyqueuosine(34) in tRNA + adenine + L-methionine + 2 H(+). The protein operates within tRNA modification; tRNA-queuosine biosynthesis. In terms of biological role, transfers and isomerizes the ribose moiety from AdoMet to the 7-aminomethyl group of 7-deazaguanine (preQ1-tRNA) to give epoxyqueuosine (oQ-tRNA). The chain is S-adenosylmethionine:tRNA ribosyltransferase-isomerase from Cupriavidus necator (strain ATCC 17699 / DSM 428 / KCTC 22496 / NCIMB 10442 / H16 / Stanier 337) (Ralstonia eutropha).